The following is a 344-amino-acid chain: Heat-inducible transcription repressor HrcA (344 aa).

This sequence belongs to the HrcA family.

Functionally, negative regulator of class I heat shock genes (grpE-dnaK-dnaJ and groELS operons). Prevents heat-shock induction of these operons. The protein is Heat-inducible transcription repressor HrcA of Streptococcus uberis (strain ATCC BAA-854 / 0140J).